Consider the following 608-residue polypeptide: Isoprene synthase, chloroplastic (608 aa).

The N-terminal 45 residues, 1 to 45 (MATNLLCLSNKLSSPTPTPSTRFPQSKNFITQKTSLANPKPWRVI), are a transit peptide targeting the chloroplast. Aspartate 350 contacts dimethylallyl diphosphate. Positions 350 and 354 each coordinate Mg(2+). Residues 350-354 (DDVYD) carry the DDXXD motif motif. Dimethylallyl diphosphate is bound by residues glutamate 428, arginine 494, and asparagine 497. Asparagine 497, threonine 501, and glutamate 505 together coordinate Mg(2+).

This sequence belongs to the terpene synthase family. Tpsb subfamily. Mg(2+) is required as a cofactor. Requires Mn(2+) as cofactor.

It is found in the plastid. The protein localises to the chloroplast. The enzyme catalyses dimethylallyl diphosphate = isoprene + diphosphate. Its function is as follows. Lyase that catalyzes the formation of isoprene from dimethylallyl diphosphate. This Pueraria montana var. lobata (Kudzu vine) protein is Isoprene synthase, chloroplastic (ISPS).